A 54-amino-acid chain; its full sequence is ATP synthase protein 8 (54 aa).

The chain crosses the membrane as a helical span at residues 9 to 29 (WIINFFIVWTADFTLLIVLSI).

Belongs to the ATPase protein 8 family. F-type ATPases have 2 components, CF(1) - the catalytic core - and CF(0) - the membrane proton channel.

Its subcellular location is the mitochondrion membrane. In terms of biological role, mitochondrial membrane ATP synthase (F(1)F(0) ATP synthase or Complex V) produces ATP from ADP in the presence of a proton gradient across the membrane which is generated by electron transport complexes of the respiratory chain. F-type ATPases consist of two structural domains, F(1) - containing the extramembraneous catalytic core and F(0) - containing the membrane proton channel, linked together by a central stalk and a peripheral stalk. During catalysis, ATP synthesis in the catalytic domain of F(1) is coupled via a rotary mechanism of the central stalk subunits to proton translocation. Part of the complex F(0) domain. Minor subunit located with subunit a in the membrane. This Arbacia lixula (Black urchin) protein is ATP synthase protein 8 (MT-ATP8).